We begin with the raw amino-acid sequence, 681 residues long: MSKGILQVHPPICDCPGCRISSPVNRGRLADKRTVALPAARNLKKERTPSFSASDGDSDGSGPTCGRRPGLKQEDGPHIRIMKRRVHTHWDVNISFREASCSQDGNLPTLISSVHRSRHLVMPEHQSRCEFQRGSLEIGLRPAGDLLGKRLGRSPRISSDCFSEKRARSESPQEALLLPRELGPSMAPEDHYRRLVSALSEASTFEDPQRLYHLGLPSHGEDPPWHDPPHHLPSHDLLRVRQEVAAAALRGPSGLEAHLPSSTAGQRRKQGLAQHREGAAPAAAPSFSERELPQPPPLLSPQNAPHVALGPHLRPPFLGVPSALCQTPGYGFLPPAQAEMFAWQQELLRKQNLARLELPADLLRQKELESARPQLLAPETALRPNDGAEELQRRGALLVLNHGAAPLLALPPQGPPGSGPPTPSRDSARRAPRKGGPGPASARPSESKEMTGARLWAQDGSEDEPPKDSDGEDPETAAVGCRGPTPGQAPAGGAGAEGKGLFPGSTLPLGFPYAVSPYFHTGAVGGLSMDGEEAPAPEDVTKWTVDDVCSFVGGLSGCGEYTRVFREQGIDGETLPLLTEEHLLTNMGLKLGPALKIRAQVARRLGRVFYVASFPVALPLQPPTLRAPERELGTGEQPLSPTTATSPYGGGHALAGQTSPKQENGTLALLPGAPDPSQPLC.

Disordered stretches follow at residues 41–77 (RNLK…EDGP), 212–234 (YHLG…HLPS), 251–307 (GPSG…APHV), and 407–498 (LLAL…GAEG). Lys-72 participates in a covalent cross-link: Glycyl lysine isopeptide (Lys-Gly) (interchain with G-Cter in SUMO2). Basic and acidic residues predominate over residues 219–234 (HGEDPPWHDPPHHLPS). Pro residues predominate over residues 412-423 (PQGPPGSGPPTP). Thr-485 carries the post-translational modification Phosphothreonine. The SAM domain occupies 543-608 (WTVDDVCSFV…AQVARRLGRV (66 aa)). The segment at 625-681 (LRAPERELGTGEQPLSPTTATSPYGGGHALAGQTSPKQENGTLALLPGAPDPSQPLC) is disordered. Composition is skewed to polar residues over residues 637 to 646 (QPLSPTTATS) and 656 to 665 (GQTSPKQENG). A Phosphoserine modification is found at Ser-640.

Self-associates. Component of a Polycomb group (PcG) multiprotein PRC1-like complex. Interacts with SAMD7 and PHC2. As to expression, expressed in the outer and inner nuclear layers, ganglion cell layer and rod photoreceptors of the retina (at protein level). Widely expressed, showing the highest expression in kidney, prostate and retina.

Its subcellular location is the nucleus. In terms of biological role, component of a Polycomb group (PcG) multiprotein PRC1-like complex, essential for establishing rod photoreceptor cell identity and function by silencing nonrod gene expression in developing rod photoreceptor cells. This is Sterile alpha motif domain-containing protein 11 (SAMD11) from Homo sapiens (Human).